Reading from the N-terminus, the 344-residue chain is Serpentine receptor class alpha-27 (344 aa).

7 consecutive transmembrane segments (helical) span residues 28–48 (SIWM…TFYL), 67–87 (QILL…FLEI), 128–148 (GLLS…TVYV), 157–177 (MLIT…YGGV), 203–223 (AIFW…LLNI), 252–272 (ICSV…ALAI), and 287–307 (INIQ…VLIY).

The protein belongs to the nematode receptor-like protein sra family.

It is found in the membrane. This Caenorhabditis elegans protein is Serpentine receptor class alpha-27 (sra-27).